The primary structure comprises 1035 residues: Enteropeptidase (1035 aa).

G2 carries N-myristoyl glycine lipidation. Residues 2–18 lie on the Cytoplasmic side of the membrane; it reads GSKRSVPSRHRSLTTYE. Residues 19–47 form a helical; Signal-anchor for type II membrane protein membrane-spanning segment; the sequence is VMFAVLFVILVALCAGLIAVSWLSIQGSV. Over 48 to 1035 the chain is Extracellular; that stretch reads KDAAFGKSHE…FTEWIQSFLH (988 aa). Residues 54 to 169 enclose the SEA domain; it reads KSHEARGTLK…NSIDITASLE (116 aa). N-linked (GlcNAc...) asparagine glycosylation is found at N116, N147, N170, and N194. The region spanning 197–238 is the LDL-receptor class A 1 domain; the sequence is IECPPDSRLCADALKCIAIDLFCDGELNCPDGSDEDNKTCAT. 4 cysteine pairs are disulfide-bonded: C199/C212, C206/C225, C219/C236, and C240/C269. N233, N263, N264, N404, N456, N486, N519, N550, and N646 each carry an N-linked (GlcNAc...) asparagine glycan. One can recognise a CUB 1 domain in the interval 240-350; that stretch reads CDGRFLLTGS…IGFKVTYTAF (111 aa). The 163-residue stretch at 358 to 520 folds into the MAM domain; it reads YEKINCNFED…ISLTYGICNV (163 aa). A disulfide bridge connects residues C540 and C568. A CUB 2 domain is found at 540–650; it reads CGGPHDLWEP…QGFKANFTTG (111 aa). In terms of domain architecture, LDL-receptor class A 2 spans 657–695; sequence EPCKEDNFQCKDGECIPLVNLCDGFPHCKDGSDEAHCVR. 3 disulfides stabilise this stretch: C659-C671, C666-C684, and C678-C693. The 94-residue stretch at 694 to 787 folds into the SRCR domain; the sequence is VRLFNGTTDS…LILLQCNYKS (94 aa). N-linked (GlcNAc...) asparagine glycans are attached at residues N698, N722, N741, and N762. Disulfide bonds link C773–C783, C788–C912, C826–C842, C926–C993, C957–C972, and C983–C1011. Residues 801–1035 enclose the Peptidase S1 domain; that stretch reads IVGGSDSREG…FTEWIQSFLH (235 aa). Catalysis depends on H841, which acts as the Charge relay system. N864 carries an N-linked (GlcNAc...) asparagine glycan. Catalysis depends on D892, which acts as the Charge relay system. N903 and N965 each carry an N-linked (GlcNAc...) asparagine glycan. The Charge relay system role is filled by S987.

This sequence belongs to the peptidase S1 family. Heterodimer of a catalytic (light) chain and a multidomain (heavy) chain linked by a disulfide bond. Post-translationally, the chains are derived from a single precursor that is cleaved by a trypsin-like protease. In terms of tissue distribution, intestinal brush border.

Its subcellular location is the membrane. It carries out the reaction Activation of trypsinogen by selective cleavage of 6-Lys-|-Ile-7 bond.. Functionally, responsible for initiating activation of pancreatic proteolytic proenzymes (trypsin, chymotrypsin and carboxypeptidase A). It catalyzes the conversion of trypsinogen to trypsin which in turn activates other proenzymes including chymotrypsinogen, procarboxypeptidases, and proelastases. The sequence is that of Enteropeptidase (TMPRSS15) from Bos taurus (Bovine).